The following is a 386-amino-acid chain: uncharacterized protein (386 aa).

Residues 29–76 (KYWKFLNEDCKIEVLKYLDYCSRCQLSICSKSDHKLVSITPLYVYEIE) enclose the F-box domain.

This is an uncharacterized protein from Caenorhabditis elegans.